The sequence spans 489 residues: Probable cytochrome P450 CYP44 (489 aa).

Positions 12–31 are disordered; that stretch reads VEKCPYSPTSSPNTPPRTFS. Residues 16–29 are compositionally biased toward low complexity; the sequence is PYSPTSSPNTPPRT. Cys438 lines the heme pocket.

This sequence belongs to the cytochrome P450 family. The cofactor is heme.

In terms of biological role, cytochromes P450 are a group of heme-thiolate monooxygenases. They oxidize a variety of structurally unrelated compounds, including steroids, fatty acids, and xenobiotics. The polypeptide is Probable cytochrome P450 CYP44 (cyp-44A1) (Caenorhabditis elegans).